A 230-amino-acid chain; its full sequence is uncharacterized protein (230 aa).

The signal sequence occupies residues 1-21 (MARYDARLRGIGKAHACSAFA). Positions 47 to 190 (SASVQENFIA…TVQTSSSGDP (144 aa)) are disordered. Polar residues predominate over residues 141 to 150 (PQSQTSANSQ). Positions 151–165 (KKPEIRCRERSKNAR) are enriched in basic and acidic residues. A compositionally biased stretch (polar residues) spans 173-188 (AVATNEAETVQTSSSG).

The protein to R.meliloti RA0936 and y4aO.

This is an uncharacterized protein from Sinorhizobium fredii (strain NBRC 101917 / NGR234).